Consider the following 102-residue polypeptide: Large ribosomal subunit protein bL21 (102 aa).

Belongs to the bacterial ribosomal protein bL21 family. In terms of assembly, part of the 50S ribosomal subunit. Contacts protein L20.

Its function is as follows. This protein binds to 23S rRNA in the presence of protein L20. This is Large ribosomal subunit protein bL21 from Nitratiruptor sp. (strain SB155-2).